The chain runs to 147 residues: Small ribosomal subunit protein eS10B (147 aa).

The segment at 90 to 147 (THKRQVRPAAPRAGRPEPRERSSAADAGYRRAEKKDDGAAPGGFAPSFRGGFGRPVAA) is disordered. Positions 103–127 (GRPEPRERSSAADAGYRRAEKKDDG) are enriched in basic and acidic residues.

This sequence belongs to the eukaryotic ribosomal protein eS10 family. As to quaternary structure, component of the small ribosomal subunit (SSU). Mature yeast ribosomes consist of a small (40S) and a large (60S) subunit. The 40S small subunit contains 1 molecule of ribosomal RNA (18S rRNA) and at least 33 different proteins. The large 60S subunit contains 3 rRNA molecules (25S, 5.8S and 5S rRNA) and at least 46 different proteins. eS10 interacts with GCN1 (via middle region); this interaction is direct and promotes GCN2 kinase activity.

Its subcellular location is the cytoplasm. Component of the ribosome, a large ribonucleoprotein complex responsible for the synthesis of proteins in the cell. The small ribosomal subunit (SSU) binds messenger RNAs (mRNAs) and translates the encoded message by selecting cognate aminoacyl-transfer RNA (tRNA) molecules. The large subunit (LSU) contains the ribosomal catalytic site termed the peptidyl transferase center (PTC), which catalyzes the formation of peptide bonds, thereby polymerizing the amino acids delivered by tRNAs into a polypeptide chain. The nascent polypeptides leave the ribosome through a tunnel in the LSU and interact with protein factors that function in enzymatic processing, targeting, and the membrane insertion of nascent chains at the exit of the ribosomal tunnel. eS10 plays a role as a positive regulator of the GCN2 kinase activity by stimulating GCN1-mediated GCN2 activation. The sequence is that of Small ribosomal subunit protein eS10B (rps1002) from Schizosaccharomyces pombe (strain 972 / ATCC 24843) (Fission yeast).